We begin with the raw amino-acid sequence, 229 residues long: Aquaporin Z (229 aa).

Helical transmembrane passes span 8 to 28 (FFGT…AAGV) and 33 to 53 (IGYL…AYAI). The short motif at 62 to 64 (NPA) is the NPA 1 element. The next 3 helical transmembrane spans lie at 81–101 (LPYV…LYLI), 131–151 (AALV…LGAT), and 158–178 (GFAP…SIPV). The NPA 2 signature appears at 184–186 (NPA). The helical transmembrane segment at 199–219 (AVSQLWLFWVAPILGAVLGAL) threads the bilayer.

Belongs to the MIP/aquaporin (TC 1.A.8) family. As to quaternary structure, homotetramer.

The protein resides in the cell inner membrane. The catalysed reaction is H2O(in) = H2O(out). Its function is as follows. Channel that permits osmotically driven movement of water in both directions. It is involved in the osmoregulation and in the maintenance of cell turgor during volume expansion in rapidly growing cells. It mediates rapid entry or exit of water in response to abrupt changes in osmolarity. The protein is Aquaporin Z of Pseudomonas aeruginosa (strain ATCC 15692 / DSM 22644 / CIP 104116 / JCM 14847 / LMG 12228 / 1C / PRS 101 / PAO1).